Here is a 365-residue protein sequence, read N- to C-terminus: Aspartate-semialdehyde dehydrogenase (365 aa).

8 residues coordinate NADP(+): Thr-15, Gly-16, Thr-17, Val-18, Ser-40, Ser-43, Leu-89, and Asp-90. Cys-156 functions as the Acyl-thioester intermediate in the catalytic mechanism. Gly-188 lines the NADP(+) pocket. Catalysis depends on His-255, which acts as the Proton acceptor. Asn-342 provides a ligand contact to NADP(+).

This sequence belongs to the aspartate-semialdehyde dehydrogenase family. As to quaternary structure, homotetramer; dimer of dimers.

The protein resides in the cytoplasm. It is found in the cytosol. The protein localises to the nucleus. The enzyme catalyses L-aspartate 4-semialdehyde + phosphate + NADP(+) = 4-phospho-L-aspartate + NADPH + H(+). It participates in amino-acid biosynthesis; L-methionine biosynthesis via de novo pathway; L-homoserine from L-aspartate: step 2/3. It functions in the pathway amino-acid biosynthesis; L-threonine biosynthesis; L-threonine from L-aspartate: step 2/5. Inhibited by the competitive inhibitor 1,4-benzoquinone and derivates such as 2-chloro-3-methoxy-1,4-naphthoquinone, 2,3-dichloro-1,4-naphthoquinone, 2-chloro-1,4-naphthoquinone, 2-bromo-1,4-naphthoquinone and 2,3-dichloro-5,8-dihydroxy-1,4-naphthoquinone. Catalyzes the NADPH-dependent formation of L-aspartate 4-semialdehyde (L-ASA) by the reductive dephosphorylation of 4-phospho-L-aspartate. Mediates the second step in the biosynthesis of amino acids that derive from aspartate (the aspartate family of amino acids), including methioinine and threonine, the latter of which is a precursor to isoleucine. The chain is Aspartate-semialdehyde dehydrogenase from Cryptococcus neoformans var. neoformans serotype D (strain JEC21 / ATCC MYA-565) (Filobasidiella neoformans).